A 94-amino-acid chain; its full sequence is MATLQQAQQQNNQLTQQNNQLTQQNNQLTQRVNELTRFLEDANRKIQIKENVIKSSEAENRKNLAEINRLHSENHRLIQQSTRTICQKCSMRSN.

The tract at residues 1–22 (MATLQQAQQQNNQLTQQNNQLT) is disordered. A coiled-coil region spans residues 1 to 77 (MATLQQAQQQ…NRLHSENHRL (77 aa)).

This is an uncharacterized protein from Acheta domesticus (House cricket).